A 168-amino-acid polypeptide reads, in one-letter code: MAAKKAGKAGATKDRNNQVVASNRRARHNYAILDTYEAGIALMGTEVKSLRDGQASLADAFATVDDGEIWLRNLHIPEYQHGSWTNHAPRRNRKLLLHRREIDNLIGKIRDGNLTLVPLSLYFTGGKVKVELALARGKQAHDKRQDLARRDAEREVVRELGRRAKGMS.

It belongs to the SmpB family.

Its subcellular location is the cytoplasm. In terms of biological role, required for rescue of stalled ribosomes mediated by trans-translation. Binds to transfer-messenger RNA (tmRNA), required for stable association of tmRNA with ribosomes. tmRNA and SmpB together mimic tRNA shape, replacing the anticodon stem-loop with SmpB. tmRNA is encoded by the ssrA gene; the 2 termini fold to resemble tRNA(Ala) and it encodes a 'tag peptide', a short internal open reading frame. During trans-translation Ala-aminoacylated tmRNA acts like a tRNA, entering the A-site of stalled ribosomes, displacing the stalled mRNA. The ribosome then switches to translate the ORF on the tmRNA; the nascent peptide is terminated with the 'tag peptide' encoded by the tmRNA and targeted for degradation. The ribosome is freed to recommence translation, which seems to be the essential function of trans-translation. The protein is SsrA-binding protein of Mycobacterium sp. (strain JLS).